The chain runs to 336 residues: tRNA N6-adenosine threonylcarbamoyltransferase (336 aa).

Residues His114 and His118 each coordinate Fe cation. Substrate is bound by residues 136–140 (LVSGG), Asp169, Gly182, Asp186, and Asn275. A Fe cation-binding site is contributed by Asp301.

Belongs to the KAE1 / TsaD family. It depends on Fe(2+) as a cofactor.

It is found in the cytoplasm. It carries out the reaction L-threonylcarbamoyladenylate + adenosine(37) in tRNA = N(6)-L-threonylcarbamoyladenosine(37) in tRNA + AMP + H(+). In terms of biological role, required for the formation of a threonylcarbamoyl group on adenosine at position 37 (t(6)A37) in tRNAs that read codons beginning with adenine. Is involved in the transfer of the threonylcarbamoyl moiety of threonylcarbamoyl-AMP (TC-AMP) to the N6 group of A37, together with TsaE and TsaB. TsaD likely plays a direct catalytic role in this reaction. The protein is tRNA N6-adenosine threonylcarbamoyltransferase of Streptococcus pneumoniae serotype 19F (strain G54).